A 56-amino-acid chain; its full sequence is Male-specific sperm protein Mst87F (56 aa).

The protein belongs to the MST(3)CGP family. In terms of tissue distribution, testis.

The polypeptide is Male-specific sperm protein Mst87F (Mst87F) (Drosophila melanogaster (Fruit fly)).